A 116-amino-acid polypeptide reads, in one-letter code: NADH-ubiquinone oxidoreductase chain 3 (116 aa).

Helical transmembrane passes span 3–23, 56–76, and 85–105; these read LITT…TISF, FFLI…LLPL, and PALT…GLIY.

The protein belongs to the complex I subunit 3 family.

Its subcellular location is the mitochondrion membrane. The enzyme catalyses a ubiquinone + NADH + 5 H(+)(in) = a ubiquinol + NAD(+) + 4 H(+)(out). Core subunit of the mitochondrial membrane respiratory chain NADH dehydrogenase (Complex I) that is believed to belong to the minimal assembly required for catalysis. Complex I functions in the transfer of electrons from NADH to the respiratory chain. The immediate electron acceptor for the enzyme is believed to be ubiquinone. The protein is NADH-ubiquinone oxidoreductase chain 3 (MT-ND3) of Salmo salar (Atlantic salmon).